The following is a 280-amino-acid chain: Elongation factor Ts (280 aa).

The interval Thr79–Val82 is involved in Mg(2+) ion dislocation from EF-Tu.

It belongs to the EF-Ts family.

The protein resides in the cytoplasm. Associates with the EF-Tu.GDP complex and induces the exchange of GDP to GTP. It remains bound to the aminoacyl-tRNA.EF-Tu.GTP complex up to the GTP hydrolysis stage on the ribosome. This is Elongation factor Ts from Treponema denticola (strain ATCC 35405 / DSM 14222 / CIP 103919 / JCM 8153 / KCTC 15104).